The sequence spans 430 residues: Dihydrolipoyllysine-residue acetyltransferase component of pyruvate dehydrogenase complex (430 aa).

One can recognise a Lipoyl-binding domain in the interval 2–77 (AFEFRLPDIG…VVGDVIVKID (76 aa)). Position 43 is an N6-lipoyllysine (Lys43). The segment at 80–122 (DAEDMQFKGHDDDSSSKEEPAKEEAPAEQAPVATQTEEVDENR) is disordered. Basic and acidic residues predominate over residues 84 to 104 (MQFKGHDDDSSSKEEPAKEEA). The region spanning 125 to 162 (KAMPSVRKYAREKGVNIKAVSGSGKNGRITKEDVDAYL) is the Peripheral subunit-binding (PSBD) domain. Positions 165-199 (GAPTASNESAASATNEEVAETPAAPAAVSLEGDFP) are disordered. Low complexity predominate over residues 168 to 192 (TASNESAASATNEEVAETPAAPAAV). The active site involves His401.

This sequence belongs to the 2-oxoacid dehydrogenase family. Forms a 24-polypeptide structural core with octahedral symmetry. The cofactor is (R)-lipoate.

The catalysed reaction is N(6)-[(R)-dihydrolipoyl]-L-lysyl-[protein] + acetyl-CoA = N(6)-[(R)-S(8)-acetyldihydrolipoyl]-L-lysyl-[protein] + CoA. Its function is as follows. The pyruvate dehydrogenase complex catalyzes the overall conversion of pyruvate to acetyl-CoA and CO(2). It contains multiple copies of three enzymatic components: pyruvate dehydrogenase (E1), dihydrolipoamide acetyltransferase (E2) and lipoamide dehydrogenase (E3). This is Dihydrolipoyllysine-residue acetyltransferase component of pyruvate dehydrogenase complex (pdhC) from Staphylococcus aureus (strain MRSA252).